The following is a 374-amino-acid chain: Methionine import ATP-binding protein MetN 2 (374 aa).

The 240-residue stretch at 32–271 folds into the ABC transporter domain; that stretch reads VRFVGLGKTY…PQHEVSQTLL (240 aa). 68 to 75 is a binding site for ATP; it reads GRSGAGKS.

Belongs to the ABC transporter superfamily. Methionine importer (TC 3.A.1.24) family. The complex is composed of two ATP-binding proteins (MetN), two transmembrane proteins (MetI) and a solute-binding protein (MetQ).

It is found in the cell inner membrane. The catalysed reaction is L-methionine(out) + ATP + H2O = L-methionine(in) + ADP + phosphate + H(+). The enzyme catalyses D-methionine(out) + ATP + H2O = D-methionine(in) + ADP + phosphate + H(+). Functionally, part of the ABC transporter complex MetNIQ involved in methionine import. Responsible for energy coupling to the transport system. The chain is Methionine import ATP-binding protein MetN 2 from Pseudomonas fluorescens (strain Pf0-1).